The primary structure comprises 557 residues: Urease subunit alpha (557 aa).

The 428-residue stretch at 130–557 (GFIDTHIHWV…LPLTQLYFIY (428 aa)) folds into the Urease domain. Ni(2+) contacts are provided by H135, H137, and K217. K217 carries the N6-carboxylysine modification. H219 contacts substrate. Ni(2+) is bound by residues H246 and H272. Residue H320 is the Proton donor of the active site. Position 360 (D360) interacts with Ni(2+).

It belongs to the metallo-dependent hydrolases superfamily. Urease alpha subunit family. In terms of assembly, heterohexamer of 3 UreC (alpha) and 3 UreAB (gamma/beta) subunits. Ni cation is required as a cofactor. Post-translationally, carboxylation allows a single lysine to coordinate two nickel ions.

The protein localises to the cytoplasm. It catalyses the reaction urea + 2 H2O + H(+) = hydrogencarbonate + 2 NH4(+). It participates in nitrogen metabolism; urea degradation; CO(2) and NH(3) from urea (urease route): step 1/1. The sequence is that of Urease subunit alpha from Sulfurisphaera tokodaii (strain DSM 16993 / JCM 10545 / NBRC 100140 / 7) (Sulfolobus tokodaii).